A 451-amino-acid chain; its full sequence is UDP-N-acetylmuramate--L-alanine ligase (451 aa).

110–116 (GTHGKTT) lines the ATP pocket.

The protein belongs to the MurCDEF family.

Its subcellular location is the cytoplasm. It catalyses the reaction UDP-N-acetyl-alpha-D-muramate + L-alanine + ATP = UDP-N-acetyl-alpha-D-muramoyl-L-alanine + ADP + phosphate + H(+). It functions in the pathway cell wall biogenesis; peptidoglycan biosynthesis. In terms of biological role, cell wall formation. The sequence is that of UDP-N-acetylmuramate--L-alanine ligase from Francisella tularensis subsp. tularensis (strain SCHU S4 / Schu 4).